A 182-amino-acid chain; its full sequence is Translation initiation factor IF-3 (182 aa).

Belongs to the IF-3 family. Monomer.

The protein localises to the cytoplasm. IF-3 binds to the 30S ribosomal subunit and shifts the equilibrium between 70S ribosomes and their 50S and 30S subunits in favor of the free subunits, thus enhancing the availability of 30S subunits on which protein synthesis initiation begins. The chain is Translation initiation factor IF-3 from Endomicrobium trichonymphae.